The following is a 402-amino-acid chain: Serine--glyoxylate aminotransferase (402 aa).

At Lys-201 the chain carries N6-(pyridoxal phosphate)lysine.

The protein belongs to the class-V pyridoxal-phosphate-dependent aminotransferase family. Requires pyridoxal 5'-phosphate as cofactor.

The enzyme catalyses glyoxylate + L-serine = 3-hydroxypyruvate + glycine. Its pathway is one-carbon metabolism; formaldehyde assimilation via serine pathway. This Methylorubrum extorquens (strain ATCC 14718 / DSM 1338 / JCM 2805 / NCIMB 9133 / AM1) (Methylobacterium extorquens) protein is Serine--glyoxylate aminotransferase.